The sequence spans 804 residues: Leucine--tRNA ligase (804 aa).

The 'HIGH' region motif lies at 40–51; it reads PYPSGAGLHVGH. Residues 576-580 carry the 'KMSKS' region motif; that stretch reads KMSKS. An ATP-binding site is contributed by Lys579.

Belongs to the class-I aminoacyl-tRNA synthetase family.

The protein resides in the cytoplasm. The enzyme catalyses tRNA(Leu) + L-leucine + ATP = L-leucyl-tRNA(Leu) + AMP + diphosphate. The chain is Leucine--tRNA ligase from Staphylococcus aureus (strain bovine RF122 / ET3-1).